A 299-amino-acid chain; its full sequence is Bifunctional protein FolD 2 (299 aa).

Residues 168-170 (GRS), Ser193, and Ile234 each bind NADP(+).

This sequence belongs to the tetrahydrofolate dehydrogenase/cyclohydrolase family. As to quaternary structure, homodimer.

The catalysed reaction is (6R)-5,10-methylene-5,6,7,8-tetrahydrofolate + NADP(+) = (6R)-5,10-methenyltetrahydrofolate + NADPH. It carries out the reaction (6R)-5,10-methenyltetrahydrofolate + H2O = (6R)-10-formyltetrahydrofolate + H(+). Its pathway is one-carbon metabolism; tetrahydrofolate interconversion. Catalyzes the oxidation of 5,10-methylenetetrahydrofolate to 5,10-methenyltetrahydrofolate and then the hydrolysis of 5,10-methenyltetrahydrofolate to 10-formyltetrahydrofolate. The sequence is that of Bifunctional protein FolD 2 from Rhizobium etli (strain ATCC 51251 / DSM 11541 / JCM 21823 / NBRC 15573 / CFN 42).